Consider the following 360-residue polypeptide: Cuticle collagen dpy-2 (360 aa).

3 triple-helical region regions span residues 123 to 152 (GERG…PGTT), 174 to 230 (GPRG…KGRT), and 238 to 303 (GPPG…PGTC). Disordered regions lie at residues 127-158 (PSGD…ASCI) and 174-360 (GPRG…IRKW). Residues 189 to 198 (GEYGIGGRPG) show a composition bias toward gly residues. Residues 242–258 (DSGLPGPWGPPGSAGMP) are compositionally biased toward low complexity. Residues 273-288 (PGPPGAPGPGGMPGPN) show a composition bias toward pro residues.

This sequence belongs to the cuticular collagen family. Collagen polypeptide chains are complexed within the cuticle by disulfide bonds and other types of covalent cross-links.

Its function is as follows. Nematode cuticles are composed largely of collagen-like proteins. The cuticle functions both as an exoskeleton and as a barrier to protect the worm from its environment. Mutations in dpy-2 affects the body shape. The sequence is that of Cuticle collagen dpy-2 (dpy-2) from Caenorhabditis elegans.